Reading from the N-terminus, the 264-residue chain is Glutamate racemase (264 aa).

Substrate is bound by residues 10 to 11 (DS) and 42 to 43 (YG). Catalysis depends on C73, which acts as the Proton donor/acceptor. Residue 74–75 (NT) participates in substrate binding. The active-site Proton donor/acceptor is the C181. 182–183 (TH) provides a ligand contact to substrate.

The protein belongs to the aspartate/glutamate racemases family.

The catalysed reaction is L-glutamate = D-glutamate. Its pathway is cell wall biogenesis; peptidoglycan biosynthesis. Provides the (R)-glutamate required for cell wall biosynthesis. This chain is Glutamate racemase, found in Thermoanaerobacter pseudethanolicus (strain ATCC 33223 / 39E) (Clostridium thermohydrosulfuricum).